Consider the following 140-residue polypeptide: Putative nickel-responsive regulator (140 aa).

Residues His-81, His-92, His-94, and Cys-100 each coordinate Ni(2+).

The protein belongs to the transcriptional regulatory CopG/NikR family. Requires Ni(2+) as cofactor.

Its function is as follows. Transcriptional regulator. In Methanococcoides burtonii (strain DSM 6242 / NBRC 107633 / OCM 468 / ACE-M), this protein is Putative nickel-responsive regulator.